We begin with the raw amino-acid sequence, 283 residues long: NAD kinase (283 aa).

Aspartate 66 acts as the Proton acceptor in catalysis. NAD(+) contacts are provided by residues 66–67 (DG), 140–141 (ND), arginine 151, lysine 168, aspartate 170, 181–186 (TGYCLS), and glutamine 240.

The protein belongs to the NAD kinase family. A divalent metal cation is required as a cofactor.

It is found in the cytoplasm. The catalysed reaction is NAD(+) + ATP = ADP + NADP(+) + H(+). Involved in the regulation of the intracellular balance of NAD and NADP, and is a key enzyme in the biosynthesis of NADP. Catalyzes specifically the phosphorylation on 2'-hydroxyl of the adenosine moiety of NAD to yield NADP. In Geobacter metallireducens (strain ATCC 53774 / DSM 7210 / GS-15), this protein is NAD kinase.